We begin with the raw amino-acid sequence, 116 residues long: Glycine-rich protein 3 short isoform (116 aa).

The signal sequence occupies residues 1–24 (MASKTLLLLGLFAFLFIVSEMAAA). Positions 27 to 83 (VKSESEETVKPEQHGGGFGDNGGGRYQGGGGHGGHGGGGYQGGGGRYQGGGGRQGGG) are disordered. A compositionally biased stretch (basic and acidic residues) spans 29-39 (SESEETVKPEQ). Over residues 40-83 (HGGGFGDNGGGRYQGGGGHGGHGGGGYQGGGGRYQGGGGRQGGG) the composition is skewed to gly residues. A run of 5 repeats spans residues 54-59 (GGGGHG), 62-67 (GGGGYQ), 68-73 (GGGGRY), 75-80 (GGGGRQ), and 81-86 (GGGGSY). The 5 X 6 AA tandem repeats of G-G-G-G-[HYRS]-[GYQ] stretch occupies residues 54–86 (GGGGHGGHGGGGYQGGGGRYQGGGGRQGGGGSY).

This sequence belongs to the GRP family. As to quaternary structure, interacts with WAK1 (via the extracellular domain). Component of a 500 kDa complex, composed of GRP3 or GRP3-S, WAK1 and KAPP.

It is found in the secreted. It localises to the extracellular space. The protein localises to the extracellular matrix. Regulates the function of the receptor protein kinase WAK1. The chain is Glycine-rich protein 3 short isoform (GRP3S) from Arabidopsis thaliana (Mouse-ear cress).